A 138-amino-acid chain; its full sequence is Acidic phospholipase A2 ammodytin I1 (138 aa).

An N-terminal signal peptide occupies residues 1–16; the sequence is MRILWIVAVCLIGAEG. 7 cysteine pairs are disulfide-bonded: Cys-42–Cys-131, Cys-44–Cys-60, Cys-59–Cys-111, Cys-65–Cys-138, Cys-66–Cys-104, Cys-73–Cys-97, and Cys-91–Cys-102. Residues Tyr-43, Gly-45, and Gly-47 each contribute to the Ca(2+) site. His-63 is an active-site residue. Asp-64 lines the Ca(2+) pocket. Asp-105 is a catalytic residue.

It belongs to the phospholipase A2 family. Group II subfamily. D49 sub-subfamily. The cofactor is Ca(2+). As to expression, expressed by the venom gland.

It localises to the secreted. It carries out the reaction a 1,2-diacyl-sn-glycero-3-phosphocholine + H2O = a 1-acyl-sn-glycero-3-phosphocholine + a fatty acid + H(+). In terms of biological role, snake venom phospholipase A2 (PLA2) that has enzymatic activity but is non-toxic. PLA2 catalyzes the calcium-dependent hydrolysis of the 2-acyl groups in 3-sn-phosphoglycerides. The chain is Acidic phospholipase A2 ammodytin I1 from Vipera ammodytes ammodytes (Western sand viper).